A 390-amino-acid polypeptide reads, in one-letter code: uncharacterized protein (390 aa).

Helical transmembrane passes span Leu-10 to Leu-30, Phe-43 to Phe-63, Phe-81 to Ile-101, Ala-134 to Val-154, Ile-162 to Pro-182, Phe-213 to Asn-233, Trp-246 to Tyr-266, Ile-272 to Leu-292, Leu-298 to Phe-318, Thr-341 to Leu-361, and Phe-363 to Phe-383.

This sequence belongs to the major facilitator superfamily.

The protein localises to the cell membrane. This is an uncharacterized protein from Buchnera aphidicola subsp. Acyrthosiphon pisum (strain APS) (Acyrthosiphon pisum symbiotic bacterium).